The following is a 128-amino-acid chain: uncharacterized protein (128 aa).

The next 2 membrane-spanning stretches (helical) occupy residues 52–72 and 91–111; these read LLVI…GIFL and LFVA…VMLI.

The protein localises to the cell membrane. This is an uncharacterized protein from Mycoplasma pneumoniae (strain ATCC 29342 / M129 / Subtype 1) (Mycoplasmoides pneumoniae).